The sequence spans 570 residues: Sulfite reductase [NADPH] hemoprotein beta-component (570 aa).

4 residues coordinate [4Fe-4S] cluster: cysteine 434, cysteine 440, cysteine 479, and cysteine 483. Residue cysteine 483 coordinates siroheme.

The protein belongs to the nitrite and sulfite reductase 4Fe-4S domain family. As to quaternary structure, alpha(8)-beta(8). The alpha component is a flavoprotein, the beta component is a hemoprotein. Siroheme serves as cofactor. It depends on [4Fe-4S] cluster as a cofactor.

The enzyme catalyses hydrogen sulfide + 3 NADP(+) + 3 H2O = sulfite + 3 NADPH + 4 H(+). It participates in sulfur metabolism; hydrogen sulfide biosynthesis; hydrogen sulfide from sulfite (NADPH route): step 1/1. In terms of biological role, component of the sulfite reductase complex that catalyzes the 6-electron reduction of sulfite to sulfide. This is one of several activities required for the biosynthesis of L-cysteine from sulfate. The polypeptide is Sulfite reductase [NADPH] hemoprotein beta-component (Escherichia coli O127:H6 (strain E2348/69 / EPEC)).